The following is a 192-amino-acid chain: dTTP/UTP pyrophosphatase (192 aa).

Asp-68 functions as the Proton acceptor in the catalytic mechanism.

This sequence belongs to the Maf family. YhdE subfamily. The cofactor is a divalent metal cation.

Its subcellular location is the cytoplasm. It carries out the reaction dTTP + H2O = dTMP + diphosphate + H(+). It catalyses the reaction UTP + H2O = UMP + diphosphate + H(+). Nucleoside triphosphate pyrophosphatase that hydrolyzes dTTP and UTP. May have a dual role in cell division arrest and in preventing the incorporation of modified nucleotides into cellular nucleic acids. This Cereibacter sphaeroides (strain ATCC 17023 / DSM 158 / JCM 6121 / CCUG 31486 / LMG 2827 / NBRC 12203 / NCIMB 8253 / ATH 2.4.1.) (Rhodobacter sphaeroides) protein is dTTP/UTP pyrophosphatase.